Consider the following 504-residue polypeptide: Chromosomal replication initiator protein DnaA (504 aa).

Residues 1–109 are domain I, interacts with DnaA modulators; it reads MTADPDPPFV…PTDEPEDAPD (109 aa). Positions 98 to 162 are disordered; that stretch reads ATPTDEPEDA…PDTSSDDSNA (65 aa). Positions 109–125 are enriched in low complexity; sequence DSFADSPAPASVPAGPA. Positions 110–163 are domain II; sequence SFADSPAPASVPAGPADADEIDDDRDARVNAQESWPKYFSRPEPDTSSDDSNAV. The interval 164-380 is domain III, AAA+ region; that stretch reads NLNRRYTFDT…GALIRVTAFA (217 aa). Residues glycine 208, glycine 210, lysine 211, and threonine 212 each coordinate ATP. The segment at 381-504 is domain IV, binds dsDNA; that stretch reads SLNKTRIDRS…TTRIRQRAKR (124 aa).

The protein belongs to the DnaA family. As to quaternary structure, oligomerizes as a right-handed, spiral filament on DNA at oriC.

It localises to the cytoplasm. Functionally, plays an essential role in the initiation and regulation of chromosomal replication. ATP-DnaA binds to the origin of replication (oriC) to initiate formation of the DNA replication initiation complex once per cell cycle. Binds the DnaA box (a 9 base pair repeat at the origin) and separates the double-stranded (ds)DNA. Forms a right-handed helical filament on oriC DNA; dsDNA binds to the exterior of the filament while single-stranded (ss)DNA is stabiized in the filament's interior. The ATP-DnaA-oriC complex binds and stabilizes one strand of the AT-rich DNA unwinding element (DUE), permitting loading of DNA polymerase. After initiation quickly degrades to an ADP-DnaA complex that is not apt for DNA replication. Binds acidic phospholipids. In terms of biological role, the probable consensus sequence for the DnaA box of this bacterium is 5'-TT(G/C)TCCACA-3'. In Mycolicibacterium smegmatis (strain ATCC 700084 / mc(2)155) (Mycobacterium smegmatis), this protein is Chromosomal replication initiator protein DnaA.